The following is a 343-amino-acid chain: GTP 3',8-cyclase (343 aa).

Residues 19–244 (PYGRTISYLR…TDVDDSTGGP (226 aa)) form the Radical SAM core domain. Arginine 28 contributes to the GTP binding site. 2 residues coordinate [4Fe-4S] cluster: cysteine 35 and cysteine 39. Tyrosine 41 is a binding site for S-adenosyl-L-methionine. [4Fe-4S] cluster is bound at residue cysteine 42. A GTP-binding site is contributed by arginine 77. Glycine 81 is an S-adenosyl-L-methionine binding site. Position 111 (threonine 111) interacts with GTP. Serine 135 is a binding site for S-adenosyl-L-methionine. Lysine 171 serves as a coordination point for GTP. Methionine 205 is an S-adenosyl-L-methionine binding site. 2 residues coordinate [4Fe-4S] cluster: cysteine 268 and cysteine 271. Position 273–275 (273–275 (RVR)) interacts with GTP. Position 285 (cysteine 285) interacts with [4Fe-4S] cluster.

This sequence belongs to the radical SAM superfamily. MoaA family. As to quaternary structure, monomer and homodimer. Requires [4Fe-4S] cluster as cofactor.

It catalyses the reaction GTP + AH2 + S-adenosyl-L-methionine = (8S)-3',8-cyclo-7,8-dihydroguanosine 5'-triphosphate + 5'-deoxyadenosine + L-methionine + A + H(+). The protein operates within cofactor biosynthesis; molybdopterin biosynthesis. Its function is as follows. Catalyzes the cyclization of GTP to (8S)-3',8-cyclo-7,8-dihydroguanosine 5'-triphosphate. The protein is GTP 3',8-cyclase of Nitrobacter hamburgensis (strain DSM 10229 / NCIMB 13809 / X14).